Consider the following 223-residue polypeptide: DNA mismatch repair protein MutH (223 aa).

The protein belongs to the MutH family.

It is found in the cytoplasm. In terms of biological role, sequence-specific endonuclease that cleaves unmethylated GATC sequences. It is involved in DNA mismatch repair. This Shewanella sp. (strain W3-18-1) protein is DNA mismatch repair protein MutH.